The sequence spans 161 residues: Phosphopantetheine adenylyltransferase (161 aa).

Residue threonine 10 coordinates substrate. ATP is bound by residues 10 to 11 (TF) and histidine 18. Lysine 42, methionine 74, and arginine 88 together coordinate substrate. Residues 89–91 (GLR), glutamate 99, and 124–130 (WSFISSS) contribute to the ATP site.

The protein belongs to the bacterial CoaD family. In terms of assembly, homohexamer. The cofactor is Mg(2+).

It is found in the cytoplasm. It carries out the reaction (R)-4'-phosphopantetheine + ATP + H(+) = 3'-dephospho-CoA + diphosphate. It participates in cofactor biosynthesis; coenzyme A biosynthesis; CoA from (R)-pantothenate: step 4/5. In terms of biological role, reversibly transfers an adenylyl group from ATP to 4'-phosphopantetheine, yielding dephospho-CoA (dPCoA) and pyrophosphate. This Edwardsiella ictaluri (strain 93-146) protein is Phosphopantetheine adenylyltransferase.